A 316-amino-acid chain; its full sequence is Transaldolase A (316 aa).

Residue Lys131 is the Schiff-base intermediate with substrate of the active site.

This sequence belongs to the transaldolase family. Type 1 subfamily. Homodimer.

It localises to the cytoplasm. It catalyses the reaction D-sedoheptulose 7-phosphate + D-glyceraldehyde 3-phosphate = D-erythrose 4-phosphate + beta-D-fructose 6-phosphate. It participates in carbohydrate degradation; pentose phosphate pathway; D-glyceraldehyde 3-phosphate and beta-D-fructose 6-phosphate from D-ribose 5-phosphate and D-xylulose 5-phosphate (non-oxidative stage): step 2/3. Transaldolase is important for the balance of metabolites in the pentose-phosphate pathway. The sequence is that of Transaldolase A from Shigella flexneri.